The sequence spans 448 residues: MAFVNTLLRTIRCSAVHTLVQEGRSLSLLKASHQLTQSRKIMLSNHVRKEEAKSEPNETLDLEEWKSILKSDIGNAEMVKTETQEDSSLNEMQELVEMWRLAGRAVPQSITTEQLQVLMELPTKTARKKYLKYLSVREVMKTNRKEKKKELKESKSKIESLDQLETKEDTPEKKNTFLLHVWDKSIDTMQRWKCVQAMKFGQPLVFDMVYEKNMSRYELENTVCQLMESEGWNRRSTDPFHIYFCSLQPYSMYHKELVKRYIGAWDNVFVTATDKSHVEMFPKEQLVYLTADSPNELKHFDHTKIYIIGSLVDRCQQTGLSLANAKRLNLATARLPLDRYLKWDVGAKNLTLDQMIRILLCLKDTGDWKKALSFVPNRKHDGFAEPAASKKRNIKNDGGMEYAASTKRNLQKNSKMYKFGASKSFIKPERTDDTSIRSTRKRWWEEEN.

The transit peptide at 1–48 (MAFVNTLLRTIRCSAVHTLVQEGRSLSLLKASHQLTQSRKIMLSNHVR) directs the protein to the mitochondrion. Positions 137-165 (REVMKTNRKEKKKELKESKSKIESLDQLE) form a coiled coil. The segment at 144 to 167 (RKEKKKELKESKSKIESLDQLETK) is disordered. Residues 190 to 382 (QRWKCVQAMK…SFVPNRKHDG (193 aa)) enclose the SAM-dependent MTase TRM10-type domain. The segment at 429–448 (ERTDDTSIRSTRKRWWEEEN) is disordered.

Belongs to the class IV-like SAM-binding methyltransferase superfamily. TRM10 family. As to quaternary structure, component of mitochondrial ribonuclease P. Interacts with HSD17B10/MRPP2.

The protein localises to the mitochondrion matrix. It is found in the mitochondrion nucleoid. The catalysed reaction is adenosine(9) in tRNA + S-adenosyl-L-methionine = N(1)-methyladenosine(9) in tRNA + S-adenosyl-L-homocysteine + H(+). It carries out the reaction guanosine(9) in tRNA + S-adenosyl-L-methionine = N(1)-methylguanosine(9) in tRNA + S-adenosyl-L-homocysteine + H(+). It catalyses the reaction an adenosine in mRNA + S-adenosyl-L-methionine = an N(1)-methyladenosine in mRNA + S-adenosyl-L-homocysteine + H(+). Mitochondrial tRNA N(1)-methyltransferase involved in mitochondrial tRNA maturation. Component of mitochondrial ribonuclease P, which cleaves tRNA molecules in their 5'-ends. Together with hsd17b10/mrpp2, forms a subcomplex of the mitochondrial ribonuclease P, named MRPP1-MRPP2 subcomplex, which displays functions that are independent of the ribonuclease P activity. The MRPP1-MRPP2 subcomplex catalyzes the formation of N(1)-methylguanine and N(1)-methyladenine at position 9 (m1G9 and m1A9, respectively) in tRNAs; trmt10c/mrpp1 acting as the catalytic N(1)-methyltransferase subunit. The MRPP1-MRPP2 subcomplex also acts as a tRNA maturation platform: following 5'-end cleavage by the mitochondrial ribonuclease P complex, the MRPP1-MRPP2 subcomplex enhances the efficiency of 3'-processing catalyzed by ELAC2, retains the tRNA product after elac2 processing and presents the nascent tRNA to the mitochondrial CCA tRNA nucleotidyltransferase TRNT1 enzyme. In addition to tRNA N(1)-methyltransferase activity, trmt10c/mrpp1 also acts as a mRNA N(1)-methyltransferase by mediating methylation of adenosine residues at the N(1) position of MT-ND5 mRNA. In Xenopus tropicalis (Western clawed frog), this protein is tRNA methyltransferase 10 homolog C.